Consider the following 614-residue polypeptide: V-type proton ATPase catalytic subunit A isoform 2 (614 aa).

Ser142 is subject to Phosphoserine. 247–254 (GAFGCGKT) is a binding site for ATP.

It belongs to the ATPase alpha/beta chains family. As to quaternary structure, V-ATPase is a heteromultimeric enzyme made up of two complexes: the ATP-hydrolytic V1 complex and the proton translocation V0 complex. The V1 complex consists of three catalytic AB heterodimers that form a heterohexamer, three peripheral stalks each consisting of EG heterodimers, one central rotor including subunits D and F, and the regulatory subunits C and H. The proton translocation complex V0 consists of the proton transport subunit a, a ring of proteolipid subunits c9c'', rotary subunit d, subunits e and f, and the accessory subunits VhaAC45 and ATP6AP2.

The enzyme catalyses ATP + H2O + 4 H(+)(in) = ADP + phosphate + 5 H(+)(out). ATP hydrolysis occurs at the interface between the nucleotide-binding domains of subunits A and B. ATP hydrolysis triggers a conformational change in the subunits D and F, which induces a shift of subunit d. The c-ring is subsequently rotated and results in a continuous proton translocation across the membrane. Catalytic subunit of the V1 complex of vacuolar(H+)-ATPase (V-ATPase), a multisubunit enzyme composed of a peripheral complex (V1) that hydrolyzes ATP and a membrane integral complex (V0) that translocates protons. V-ATPase is responsible for acidifying and maintaining the pH of intracellular compartments and in some cell types, is targeted to the plasma membrane, where it is responsible for acidifying the extracellular environment. The chain is V-type proton ATPase catalytic subunit A isoform 2 (Vha68-2) from Drosophila melanogaster (Fruit fly).